A 604-amino-acid chain; its full sequence is Proline--tRNA ligase (604 aa).

This sequence belongs to the class-II aminoacyl-tRNA synthetase family. ProS type 1 subfamily. As to quaternary structure, homodimer.

It is found in the cytoplasm. The enzyme catalyses tRNA(Pro) + L-proline + ATP = L-prolyl-tRNA(Pro) + AMP + diphosphate. Functionally, catalyzes the attachment of proline to tRNA(Pro) in a two-step reaction: proline is first activated by ATP to form Pro-AMP and then transferred to the acceptor end of tRNA(Pro). As ProRS can inadvertently accommodate and process non-cognate amino acids such as alanine and cysteine, to avoid such errors it has two additional distinct editing activities against alanine. One activity is designated as 'pretransfer' editing and involves the tRNA(Pro)-independent hydrolysis of activated Ala-AMP. The other activity is designated 'posttransfer' editing and involves deacylation of mischarged Ala-tRNA(Pro). The misacylated Cys-tRNA(Pro) is not edited by ProRS. This Nostoc punctiforme (strain ATCC 29133 / PCC 73102) protein is Proline--tRNA ligase.